We begin with the raw amino-acid sequence, 474 residues long: tRNA-2-methylthio-N(6)-dimethylallyladenosine synthase (474 aa).

Residues 3 to 120 (KKLHIKTWGC…LPEMINSVRG (118 aa)) enclose the MTTase N-terminal domain. [4Fe-4S] cluster is bound by residues Cys-12, Cys-49, Cys-83, Cys-157, Cys-161, and Cys-164. Residues 143–375 (RAEGPTAFVS…QERINQQAMA (233 aa)) form the Radical SAM core domain. One can recognise a TRAM domain in the interval 378 to 441 (RRMLGTTQRI…PNSLRGKVVR (64 aa)).

The protein belongs to the methylthiotransferase family. MiaB subfamily. As to quaternary structure, monomer. [4Fe-4S] cluster serves as cofactor.

It localises to the cytoplasm. It catalyses the reaction N(6)-dimethylallyladenosine(37) in tRNA + (sulfur carrier)-SH + AH2 + 2 S-adenosyl-L-methionine = 2-methylsulfanyl-N(6)-dimethylallyladenosine(37) in tRNA + (sulfur carrier)-H + 5'-deoxyadenosine + L-methionine + A + S-adenosyl-L-homocysteine + 2 H(+). Functionally, catalyzes the methylthiolation of N6-(dimethylallyl)adenosine (i(6)A), leading to the formation of 2-methylthio-N6-(dimethylallyl)adenosine (ms(2)i(6)A) at position 37 in tRNAs that read codons beginning with uridine. This chain is tRNA-2-methylthio-N(6)-dimethylallyladenosine synthase, found in Escherichia coli (strain SE11).